The primary structure comprises 227 residues: Trypsin (227 aa).

One can recognise a Peptidase S1 domain in the interval 1–223 (IVGGEDANVQ…YYDVLMEQIN (223 aa)). Cys-27 and Cys-43 are joined by a disulfide. Active-site charge relay system residues include His-42 and Asp-88. 2 disulfide bridges follow: Cys-150–Cys-164 and Cys-175–Cys-199. Ser-179 functions as the Charge relay system in the catalytic mechanism.

It belongs to the peptidase S1 family.

The enzyme catalyses Preferential cleavage: Arg-|-Xaa, Lys-|-Xaa.. The chain is Trypsin from Saccharopolyspora erythraea (Streptomyces erythraeus).